A 524-amino-acid polypeptide reads, in one-letter code: Tyrosine-protein kinase HCK (524 aa).

Disordered regions lie at residues 1 to 20 (MGGR…GRVP) and 35 to 71 (KASK…LPPG). Residue G2 is the site of N-myristoyl glycine attachment. G3 carries S-palmitoyl cysteine lipidation. Residue Y50 is modified to Phosphotyrosine; by autocatalysis. The SH3 domain occupies 76 to 136 (SEDTIVVALY…PSNYVARVNS (61 aa)). The 98-residue stretch at 142–239 (WFFKGISRKD…GLCQKLSVPC (98 aa)) folds into the SH2 domain. Position 200 is a phosphothreonine (T200). At Y207 the chain carries Phosphotyrosine. Positions 260 to 513 (LQMEKKLGAG…YIQSVLDDFY (254 aa)) constitute a Protein kinase domain. ATP-binding positions include 266–274 (LGAGQFGEV) and K288. D379 acts as the Proton acceptor in catalysis. Y409 carries the phosphotyrosine; by autocatalysis modification. At S460 the chain carries Phosphoserine. A Phosphotyrosine modification is found at Y520.

The protein belongs to the protein kinase superfamily. Tyr protein kinase family. SRC subfamily. In terms of assembly, interacts with ADAM15. Interacts with FASLG. Interacts with ARRB1 and ARRB2. Interacts with FCGR1A; the interaction may be indirect. Interacts with IL6ST. Interacts (via SH3 domain) with ELMO1. Interacts (via SH3 domain) with TP73. Interacts with YAP1. Interacts with ABL1 and ITGB1, and thereby recruits ABL1 to activated ITGB1. Interacts (via SH2 domain) with FLT3 (tyrosine phosphorylated). Interacts with CBL. Interacts with VAV1, WAS and RAPGEF1. Interacts (via SH3 domain) with WDCP. In terms of processing, phosphorylated on several tyrosine residues. Autophosphorylated. Becomes rapidly phosphorylated upon activation of the immunoglobulin receptors FCGR1A and FCGR2A. Phosphorylation at Tyr-409 increases kinase activity. Phosphorylation at Tyr-520 inhibits kinase activity. Kinase activity is not required for phosphorylation at Tyr-520, suggesting that this site may be a target of other kinases. Post-translationally, ubiquitinated by CBL, leading to its degradation via the proteasome. Isoform 2 palmitoylation at position 2 requires prior myristoylation. Palmitoylation at position 3 is required for caveolar localization of isoform 2. As to expression, expressed strongly in spleen and at very low levels in thymus.

It localises to the cytoplasmic vesicle. The protein localises to the secretory vesicle. Its subcellular location is the cytoplasm. It is found in the cytosol. The protein resides in the membrane. It localises to the caveola. The protein localises to the lysosome. Its subcellular location is the cell projection. It is found in the podosome membrane. The protein resides in the cell membrane. It localises to the cell junction. The protein localises to the focal adhesion. Its subcellular location is the cytoskeleton. It is found in the golgi apparatus. The protein resides in the nucleus. It catalyses the reaction L-tyrosyl-[protein] + ATP = O-phospho-L-tyrosyl-[protein] + ADP + H(+). Its activity is regulated as follows. Subject to autoinhibition, mediated by intramolecular interactions involving the SH2 and SH3 domains. Kinase activity is also regulated by phosphorylation at regulatory tyrosine residues. Phosphorylation at Tyr-409 is required for optimal activity. Phosphorylation at Tyr-520 inhibits kinase activity. Its function is as follows. Non-receptor tyrosine-protein kinase found in hematopoietic cells that transmits signals from cell surface receptors and plays an important role in the regulation of innate immune responses, including neutrophil, monocyte, macrophage and mast cell functions, phagocytosis, cell survival and proliferation, cell adhesion and migration. Acts downstream of receptors that bind the Fc region of immunoglobulins, such as FCGR1A and FCGR2A, but also CSF3R, PLAUR, the receptors for IFNG, IL2, IL6 and IL8, and integrins, such as ITGB1 and ITGB2. During the phagocytic process, mediates mobilization of secretory lysosomes, degranulation, and activation of NADPH oxidase to bring about the respiratory burst. Plays a role in the release of inflammatory molecules. Promotes reorganization of the actin cytoskeleton and actin polymerization, formation of podosomes and cell protrusions. Inhibits TP73-mediated transcription activation and TP73-mediated apoptosis. Phosphorylates CBL in response to activation of immunoglobulin gamma Fc region receptors. Phosphorylates ADAM15, BCR, ELMO1, FCGR2A, GAB1, GAB2, RAPGEF1, STAT5B, TP73, VAV1 and WAS. The sequence is that of Tyrosine-protein kinase HCK (Hck) from Rattus norvegicus (Rat).